Consider the following 480-residue polypeptide: Transmembrane protein 161A (480 aa).

Residues 1 to 28 (MAVLGVQLVVTLFTATLMHRLAPHCSFA) form the signal peptide. The Extracellular portion of the chain corresponds to 29 to 98 (RWLLCNGSLF…LTAVDALVLR (70 aa)). An N-linked (GlcNAc...) asparagine glycan is attached at Asn-34. A helical transmembrane segment spans residues 99–119 (FFLEYQWFVDFAVYSVGVYLF). Residues 120–134 (TEAYYFVLGPVQETN) lie on the Cytoplasmic side of the membrane. A helical membrane pass occupies residues 135 to 155 (IAVFWCLLTLAFSLKVFLMVT). The Extracellular segment spans residues 156–166 (RLYFSTKEGGE). Residues 167-187 (RSVCLSFAFLFLLLAMLVQVV) traverse the membrane as a helical segment. At 188–224 (REETLELGLEPGLASMTQHLEPILKKQDWDWTLPVIK) the chain is on the cytoplasmic side. A helical transmembrane segment spans residues 225-245 (LAIRLGLAVLGSLLGAFLIFP). Over 246 to 263 (GLRLAQTHQDALTLSADR) the chain is Extracellular. A helical membrane pass occupies residues 264–284 (PLLQLLLHTSFLSPLCTLWLW). At 285-304 (TKPVARDFLYQAPTRNMTFS) the chain is on the cytoplasmic side. The chain crosses the membrane as a helical span at residues 305–325 (VPSEGAFDSLRLWVLVALCLL). At 326–370 (RLAVTRPHLQAYLCLAKARVEQLRKEAGRIEAREIQQRVVRVYCY) the chain is on the extracellular side. Residues 371–391 (VTVVSLQYLTPLILTLHCTLL) form a helical membrane-spanning segment. At 392 to 450 (LKTLGGYSWALSSTPPPLAPSQPSEALIPVDPAGDEAQQTAAQVAGILGGLLTPLFLRG) the chain is on the cytoplasmic side. Residues 451–473 (MLAYIIWWTAACQLLSSLFGLYF) form a helical membrane-spanning segment. Residues 474 to 480 (HQHLAAS) are Extracellular-facing.

The protein belongs to the TMEM161 family.

The protein localises to the membrane. Functionally, may play a role in protection against oxidative stress. Overexpression leads to reduced levels of oxidant-induced DNA damage and apoptosis. This Mus musculus (Mouse) protein is Transmembrane protein 161A (Tmem161a).